The sequence spans 333 residues: Ketol-acid reductoisomerase (NADP(+)) (333 aa).

Residues 2–182 enclose the KARI N-terminal Rossmann domain; the sequence is AKMYYDSDAS…GCTRAGVLET (181 aa). NADP(+) is bound by residues 25–28, Arg-48, Ser-51, and 83–86; these read YGSQ and DERQ. Residue His-108 is part of the active site. Gly-134 is a binding site for NADP(+). The 146-residue stretch at 183 to 328 folds into the KARI C-terminal knotted domain; sequence TFKEETETDL…AELRAMMPFI (146 aa). 4 residues coordinate Mg(2+): Asp-191, Glu-195, Glu-227, and Glu-231. A substrate-binding site is contributed by Ser-252.

This sequence belongs to the ketol-acid reductoisomerase family. Requires Mg(2+) as cofactor.

The catalysed reaction is (2R)-2,3-dihydroxy-3-methylbutanoate + NADP(+) = (2S)-2-acetolactate + NADPH + H(+). It carries out the reaction (2R,3R)-2,3-dihydroxy-3-methylpentanoate + NADP(+) = (S)-2-ethyl-2-hydroxy-3-oxobutanoate + NADPH + H(+). Its pathway is amino-acid biosynthesis; L-isoleucine biosynthesis; L-isoleucine from 2-oxobutanoate: step 2/4. It participates in amino-acid biosynthesis; L-valine biosynthesis; L-valine from pyruvate: step 2/4. Its function is as follows. Involved in the biosynthesis of branched-chain amino acids (BCAA). Catalyzes an alkyl-migration followed by a ketol-acid reduction of (S)-2-acetolactate (S2AL) to yield (R)-2,3-dihydroxy-isovalerate. In the isomerase reaction, S2AL is rearranged via a Mg-dependent methyl migration to produce 3-hydroxy-3-methyl-2-ketobutyrate (HMKB). In the reductase reaction, this 2-ketoacid undergoes a metal-dependent reduction by NADPH to yield (R)-2,3-dihydroxy-isovalerate. The protein is Ketol-acid reductoisomerase (NADP(+)) of Desulfitobacterium hafniense (strain DSM 10664 / DCB-2).